Here is a 150-residue protein sequence, read N- to C-terminus: Transcriptional repressor NrdR (150 aa).

Residues 3–34 (CPFCNFSDSKVVDSRPDKGGAAIRRRRECESC) fold into a zinc finger. The 91-residue stretch at 49 to 139 (PLVTKRDGRR…VYRSFKDINE (91 aa)) folds into the ATP-cone domain.

The protein belongs to the NrdR family. Requires Zn(2+) as cofactor.

Negatively regulates transcription of bacterial ribonucleotide reductase nrd genes and operons by binding to NrdR-boxes. The polypeptide is Transcriptional repressor NrdR (Citrifermentans bemidjiense (strain ATCC BAA-1014 / DSM 16622 / JCM 12645 / Bem) (Geobacter bemidjiensis)).